Here is a 224-residue protein sequence, read N- to C-terminus: Heme response regulator HssR (224 aa).

In terms of domain architecture, Response regulatory spans 3-116 (QCLVVDDDPR…ELIFRIRAVL (114 aa)). Asp52 is modified (4-aspartylphosphate). The ompR/PhoB-type DNA-binding region spans 124 to 222 (NSEMTIGNLT…VRGQGYKVEN (99 aa)).

Post-translationally, phosphorylated by HssS.

It localises to the cytoplasm. Functionally, member of the two-component regulatory system HssS/HssR involved in intracellular heme homeostasis and tempering of staphylococcal virulence. Phosphorylated HssR binds to a direct repeat sequence within hrtAB promoter and activates the expression of hrtAB, an efflux pump, in response to extracellular heme, hemin, hemoglobin or blood. The sequence is that of Heme response regulator HssR (hssR) from Staphylococcus aureus (strain COL).